The following is a 129-amino-acid chain: Small ribosomal subunit protein uS11 (129 aa).

This sequence belongs to the universal ribosomal protein uS11 family. In terms of assembly, part of the 30S ribosomal subunit. Interacts with proteins S7 and S18. Binds to IF-3.

Functionally, located on the platform of the 30S subunit, it bridges several disparate RNA helices of the 16S rRNA. Forms part of the Shine-Dalgarno cleft in the 70S ribosome. This chain is Small ribosomal subunit protein uS11, found in Limosilactobacillus fermentum (strain NBRC 3956 / LMG 18251) (Lactobacillus fermentum).